We begin with the raw amino-acid sequence, 418 residues long: Hepatic and glial cell adhesion molecule (418 aa).

A signal peptide spans 1–33 (MKRERGALSRASRALRLSPFVYLLLIQPVPLEG). Residues 34–142 (VNITSPVRLI…GEKTINLTVD (109 aa)) enclose the Ig-like V-type domain. Residues 34-240 (VNITSPVRLI…VKITVYRRSS (207 aa)) are Extracellular-facing. Asn-35, Asn-138, Asn-167, and Asn-189 each carry an N-linked (GlcNAc...) asparagine glycan. The 87-residue stretch at 148 to 234 (PQVLVASTTV…QVRSLPVKIT (87 aa)) folds into the Ig-like C2-type domain. Cys-168 and Cys-217 form a disulfide bridge. The chain crosses the membrane as a helical span at residues 241-261 (LYIILSTGGIFLLVTLVTVCA). Topologically, residues 262–418 (CWKPSKKSRK…DESGQVEISA (157 aa)) are cytoplasmic. The interval 271–418 (KKRKLEKQNS…DESGQVEISA (148 aa)) is disordered. Ser-280 is subject to Phosphoserine. A compositionally biased stretch (basic and acidic residues) spans 287–308 (NDDRLKSEADTLPRSGEQERKN). Phosphoserine occurs at positions 321, 352, and 379. Positions 341–358 (GYSVSPPVPGRSPGLPIR) are enriched in low complexity. Residues 385 to 396 (SSPGRSRSSSRS) show a composition bias toward low complexity.

As to quaternary structure, homodimer. Dimer formation occurs predominantly through cis interactions on the cell surface. Part of a complex containing MLC1, TRPV4, AQP4 and ATP1B1. Interacts with CLCN2. Post-translationally, N-glycosylated.

Its subcellular location is the cytoplasm. It is found in the cell membrane. Involved in regulating cell motility and cell-matrix interactions. May inhibit cell growth through suppression of cell proliferation. In glia, associates and targets CLCN2 at astrocytic processes and myelinated fiber tracts where it may regulate transcellular chloride flux involved in neuron excitability. The protein is Hepatic and glial cell adhesion molecule of Mus musculus (Mouse).